Consider the following 439-residue polypeptide: Niacin transporter NiaP (439 aa).

12 helical membrane passes run 20-40, 57-77, 84-104, 108-128, 143-163, 169-189, 253-273, 288-308, 316-336, 338-358, 374-394, and 407-427; these read LWVV…IAFI, WIVS…GGLA, TVFA…AFAP, WLLA…PVAV, FIVL…LVSY, FGWH…YVII, LMLW…FTWL, FEYV…AAWL, ATLA…GQAD, VFNI…AWGV, FGAG…PIVV, and VFMM…ILGE.

It belongs to the major facilitator superfamily. Sugar transporter (TC 2.A.1.1) family.

The protein localises to the cell inner membrane. Functions as a high-affinity transporter of niacin (nicotinamide or nicotinate). Probably substantially contributes to niacin transport when its concentration in the medium is very low. This Acinetobacter baylyi (strain ATCC 33305 / BD413 / ADP1) protein is Niacin transporter NiaP.